Here is a 407-residue protein sequence, read N- to C-terminus: MKQQLLERFLSYVSFNTQSDGRSQNVPSTHSQFVFAQHLRQELVSLGFEDVQLSDKGYLTATVPANVEGVACIGFIAHLDTAPDYSGENVSPQIIENYNGEDIQLGLEEVLSPKQFSSLNQYIGQTLITTDGSSLLGGDDKAGIAEIISALHHLLTHPEIPHGKIRLCFTPDEEIGRGADHFDVESFGAQWAYTIDGGQVGELEYENFNAATAVVTAMGNNCHPGTAYGVMVNAQTIAARFHAKMPLKDTPEHSRDYDGFFHLLGMEGVTEKATLTYIIRDFDLELFEQRKRWLTELVEKYNAELSIGQLTIDIQDSYLNMKQQVLPHPHIIDIAKQAMQNLAIEPIIKPIRGGTDGSRLSYMGLPCPNLFTGGHNFHGKHEYVCVESMVKATETIVEIAKLTAQHK.

His-78 provides a ligand contact to Zn(2+). Asp-80 is a catalytic residue. A Zn(2+)-binding site is contributed by Asp-139. The Proton acceptor role is filled by Glu-173. Positions 174, 196, and 378 each coordinate Zn(2+).

This sequence belongs to the peptidase M20B family. Requires Zn(2+) as cofactor.

The protein localises to the cytoplasm. The enzyme catalyses Release of the N-terminal residue from a tripeptide.. Functionally, cleaves the N-terminal amino acid of tripeptides. This is Peptidase T from Shewanella halifaxensis (strain HAW-EB4).